A 170-amino-acid chain; its full sequence is Cathelicidin antimicrobial peptide (170 aa).

A signal peptide spans 1-30; sequence MKTQRDGPSLGRWSLVLLLLGLTMPLAVIA. The propeptide at 31-131 is cathelin-like domain (CLD); sequence RVLSYQEAVL…DISCDKDKRK (101 aa). Cystine bridges form between C86-C97 and C108-C125. Residues 150–162 are active core; the sequence is LKNIGQRIKDFFG.

It belongs to the cathelicidin family. In terms of assembly, monomer, homodimer or homotrimer (in vitro). Oligomerizes as tetra- or hexamer in solution (in vitro). Post-translationally, proteolytically cleaved by proteinase PRTN3 into antibacterial peptide LL-37. Proteolytically cleaved by cathepsin CTSG and neutrophil elastase ELANE. In terms of processing, resistant to proteolytic degradation in solution, and when bound to both zwitterionic (mimicking mammalian membranes) and negatively charged membranes (mimicking bacterial membranes). After secretion onto the skin surface, the CAMP gene product is processed by a serine protease-dependent mechanism into multiple novel antimicrobial peptides distinct from and shorter than cathelicidin LL-37. These peptides show enhanced antimicrobial action, acquiring the ability to kill skin pathogens such as S.aureus, E.coli and C.albicans. These peptides have lost the ability to stimulate CXCL8/IL8 release from keratinocytes. The peptides act synergistically, killing bacteria at lower concentrations when present together, and maintain activity at increased salt condition.

The protein localises to the secreted. It is found in the vesicle. Its function is as follows. Antimicrobial protein that is an integral component of the innate immune system. Binds to bacterial lipopolysaccharides (LPS). Acts via neutrophil N-formyl peptide receptors to enhance the release of CXCL2. Postsecretory processing generates multiple cathelicidin antimicrobial peptides with various lengths which act as a topical antimicrobial defense in sweat on skin. The unprocessed precursor form, cathelicidin antimicrobial peptide, inhibits the growth of Gram-negative E.coli and E.aerogenes with efficiencies comparable to that of the mature peptide LL-37 (in vitro). Functionally, antimicrobial peptide that is an integral component of the innate immune system. Binds to bacterial lipopolysaccharides (LPS). Causes membrane permeabilization by forming transmembrane pores (in vitro). Causes lysis of E.coli. Exhibits antimicrobial activity against Gram-negative bacteria such as P.aeruginosa, S.typhimurium, E.aerogenes, E.coli and P.syringae, Gram-positive bacteria such as L.monocytogenes, S.epidermidis, S.pyogenes and S.aureus, as well as vancomycin-resistant enterococci (in vitro). Exhibits antimicrobial activity against methicillin-resistant S.aureus, P.mirabilis, and C.albicans in low-salt media, but not in media containing 100 mM NaCl (in vitro). Forms chiral supramolecular assemblies with quinolone signal (PQS) molecules of P.aeruginosa, which may lead to interference of bacterial quorum signaling and perturbance of bacterial biofilm formation. May form supramolecular fiber-like assemblies on bacterial membranes. Induces cytokine and chemokine producation as well as TNF/TNFA and CSF2/GMCSF production in normal human keratinocytes. Exhibits hemolytic activity against red blood cells. Exhibits antimicrobial activity against E.coli and B.megaterium (in vitro). This chain is Cathelicidin antimicrobial peptide, found in Ateles fusciceps robustus (Colombian black-faced spider monkey).